The chain runs to 361 residues: Histidinol-phosphate aminotransferase (361 aa).

Lys-218 carries the post-translational modification N6-(pyridoxal phosphate)lysine.

It belongs to the class-II pyridoxal-phosphate-dependent aminotransferase family. Histidinol-phosphate aminotransferase subfamily. As to quaternary structure, homodimer. Pyridoxal 5'-phosphate is required as a cofactor.

The enzyme catalyses L-histidinol phosphate + 2-oxoglutarate = 3-(imidazol-4-yl)-2-oxopropyl phosphate + L-glutamate. It functions in the pathway amino-acid biosynthesis; L-histidine biosynthesis; L-histidine from 5-phospho-alpha-D-ribose 1-diphosphate: step 7/9. The protein is Histidinol-phosphate aminotransferase of Dinoroseobacter shibae (strain DSM 16493 / NCIMB 14021 / DFL 12).